The following is a 309-amino-acid chain: Nudix hydrolase 14, chloroplastic (309 aa).

A chloroplast-targeting transit peptide spans methionine 1–serine 60. The Nudix hydrolase domain maps to alanine 139 to glutamate 292. Residues methionine 179–glycine 200 carry the Nudix box motif. Residues glutamate 194 and glutamate 198 each contribute to the Mg(2+) site.

The protein belongs to the Nudix hydrolase family. Homodimer. Mg(2+) serves as cofactor. The cofactor is Mn(2+). As to expression, expressed in roots, leaves, stems and inflorescences.

The protein localises to the plastid. Its subcellular location is the chloroplast. It catalyses the reaction ADP-sugar + H2O = AMP + alpha-D-aldose 1-phosphate.. Its function is as follows. Mediates the hydrolysis of some nucleoside diphosphate derivatives. Can use ADP-glucose, ADP-mannose and ADP-ribose as substrates. Regulates the intracellular ADP-glucose levels linked to starch biosynthesis. The protein is Nudix hydrolase 14, chloroplastic (NUDT14) of Arabidopsis thaliana (Mouse-ear cress).